The sequence spans 394 residues: Elongation factor Tu 2 (394 aa).

Positions 10-204 constitute a tr-type G domain; the sequence is KPHVNVGTIG…ALDSYIPEPE (195 aa). The tract at residues 19–26 is G1; the sequence is GHVDHGKT. 19–26 serves as a coordination point for GTP; it reads GHVDHGKT. Threonine 26 provides a ligand contact to Mg(2+). The segment at 60 to 64 is G2; it reads GITIN. A G3 region spans residues 81–84; sequence DCPG. Residues 81 to 85 and 136 to 139 contribute to the GTP site; these read DCPGH and NKCD. The tract at residues 136–139 is G4; sequence NKCD. Residues 174–176 form a G5 region; sequence SAL.

This sequence belongs to the TRAFAC class translation factor GTPase superfamily. Classic translation factor GTPase family. EF-Tu/EF-1A subfamily. As to quaternary structure, monomer.

It localises to the cytoplasm. It catalyses the reaction GTP + H2O = GDP + phosphate + H(+). In terms of biological role, GTP hydrolase that promotes the GTP-dependent binding of aminoacyl-tRNA to the A-site of ribosomes during protein biosynthesis. This Shewanella sp. (strain MR-4) protein is Elongation factor Tu 2.